The primary structure comprises 229 residues: tRNA pseudouridine synthase B (229 aa).

Aspartate 42 functions as the Nucleophile in the catalytic mechanism.

The protein belongs to the pseudouridine synthase TruB family. Type 1 subfamily.

It catalyses the reaction uridine(55) in tRNA = pseudouridine(55) in tRNA. In terms of biological role, responsible for synthesis of pseudouridine from uracil-55 in the psi GC loop of transfer RNAs. In Ureaplasma urealyticum serovar 10 (strain ATCC 33699 / Western), this protein is tRNA pseudouridine synthase B.